The primary structure comprises 297 residues: Nucleotide-binding protein DSY4845 (297 aa).

13–20 (GLSGAGKT) lines the ATP pocket. 64-67 (DLRG) is a binding site for GTP.

This sequence belongs to the RapZ-like family.

In terms of biological role, displays ATPase and GTPase activities. The protein is Nucleotide-binding protein DSY4845 of Desulfitobacterium hafniense (strain Y51).